A 292-amino-acid chain; its full sequence is RWD domain-containing protein 2A (292 aa).

In terms of domain architecture, RWD spans 14 to 134; the sequence is LEMEMLFSMF…QWLQDNSASY (121 aa).

This is RWD domain-containing protein 2A (RWDD2A) from Macaca fascicularis (Crab-eating macaque).